A 215-amino-acid polypeptide reads, in one-letter code: Pentapeptide repeat protein QnrB4 (215 aa).

2 consecutive Pentapeptide repeat domains span residues 25-104 (TFFN…SFMN) and 117-191 (ITNT…RGVD).

This sequence belongs to the pentapeptide repeat protein family.

Its function is as follows. Probably plays a role in resistance to quinolone antibiotics. Only inhibits ATP-dependent DNA supercoiling by E.coli gyrase at high concentration (30 uM). Protects E.coli gyrase supercoiling activity from inhibition by fluoroquinolones (ciprofloxacin) at 0.1 uM, does not protect M.tuberculosis gyrase activity. This Escherichia coli protein is Pentapeptide repeat protein QnrB4.